Consider the following 430-residue polypeptide: UDP-N-acetylmuramoylalanine--D-glutamate ligase (430 aa).

109 to 115 serves as a coordination point for ATP; the sequence is GTDGKST.

It belongs to the MurCDEF family.

The protein localises to the cytoplasm. It catalyses the reaction UDP-N-acetyl-alpha-D-muramoyl-L-alanine + D-glutamate + ATP = UDP-N-acetyl-alpha-D-muramoyl-L-alanyl-D-glutamate + ADP + phosphate + H(+). The protein operates within cell wall biogenesis; peptidoglycan biosynthesis. Cell wall formation. Catalyzes the addition of glutamate to the nucleotide precursor UDP-N-acetylmuramoyl-L-alanine (UMA). The protein is UDP-N-acetylmuramoylalanine--D-glutamate ligase of Thermotoga maritima (strain ATCC 43589 / DSM 3109 / JCM 10099 / NBRC 100826 / MSB8).